Reading from the N-terminus, the 564-residue chain is Kelch repeat and BTB domain-containing protein 1 (564 aa).

Residues 21–88 enclose the BTB domain; the sequence is CDINIVINDE…IYGIPLSLTN (68 aa). In terms of domain architecture, BACK spans 123 to 219; the sequence is CIDFYIYADK…SLLSPQVIKS (97 aa). 5 Kelch repeats span residues 252 to 297, 298 to 346, 347 to 395, 397 to 441, and 442 to 492; these read IELI…VLDN, IIYM…ADDE, YIYC…MLNG, IYVI…VHDG, and KIYI…STHN.

As to quaternary structure, interacts (via BTB domain) with host CUL3.

The protein localises to the host cytoplasm. Probable substrate-specific adapter of CUL3-containing E3 ubiquitin-protein ligases which mediate the ubiquitination and subsequent proteasomal degradation of host target proteins. The sequence is that of Kelch repeat and BTB domain-containing protein 1 (KBTB1) from Bos taurus (Bovine).